Reading from the N-terminus, the 156-residue chain is 6,7-dimethyl-8-ribityllumazine synthase (156 aa).

5-amino-6-(D-ribitylamino)uracil-binding positions include phenylalanine 25, 59 to 61 (AWE), and 83 to 85 (AVI). 88–89 (ST) is a (2S)-2-hydroxy-3-oxobutyl phosphate binding site. The Proton donor role is filled by histidine 91. Residue asparagine 116 participates in 5-amino-6-(D-ribitylamino)uracil binding. Residue arginine 130 coordinates (2S)-2-hydroxy-3-oxobutyl phosphate.

This sequence belongs to the DMRL synthase family. Forms an icosahedral capsid composed of 60 subunits, arranged as a dodecamer of pentamers.

It carries out the reaction (2S)-2-hydroxy-3-oxobutyl phosphate + 5-amino-6-(D-ribitylamino)uracil = 6,7-dimethyl-8-(1-D-ribityl)lumazine + phosphate + 2 H2O + H(+). It functions in the pathway cofactor biosynthesis; riboflavin biosynthesis; riboflavin from 2-hydroxy-3-oxobutyl phosphate and 5-amino-6-(D-ribitylamino)uracil: step 1/2. Functionally, catalyzes the formation of 6,7-dimethyl-8-ribityllumazine by condensation of 5-amino-6-(D-ribitylamino)uracil with 3,4-dihydroxy-2-butanone 4-phosphate. This is the penultimate step in the biosynthesis of riboflavin. The protein is 6,7-dimethyl-8-ribityllumazine synthase of Acinetobacter baylyi (strain ATCC 33305 / BD413 / ADP1).